A 416-amino-acid chain; its full sequence is NADH-quinone oxidoreductase subunit H (416 aa).

9 consecutive transmembrane segments (helical) span residues 16-36 (LILA…LAAI), 84-104 (PVYL…FAVI), 124-144 (LAVA…GIVL), 165-185 (VVSY…YAGT), 197-217 (STWY…SMVG), 260-280 (VSAL…PISL), 288-308 (WWPL…YIWL), 320-340 (FMAI…MIVA), and 353-373 (WASG…VVLW).

Belongs to the complex I subunit 1 family. As to quaternary structure, NDH-1 is composed of 14 different subunits. Subunits NuoA, H, J, K, L, M, N constitute the membrane sector of the complex.

The protein localises to the cell membrane. It catalyses the reaction a quinone + NADH + 5 H(+)(in) = a quinol + NAD(+) + 4 H(+)(out). In terms of biological role, NDH-1 shuttles electrons from NADH, via FMN and iron-sulfur (Fe-S) centers, to quinones in the respiratory chain. The immediate electron acceptor for the enzyme in this species is believed to be menaquinone. Couples the redox reaction to proton translocation (for every two electrons transferred, four hydrogen ions are translocated across the cytoplasmic membrane), and thus conserves the redox energy in a proton gradient. This subunit may bind ubiquinone. The chain is NADH-quinone oxidoreductase subunit H from Mycobacterium sp. (strain JLS).